The sequence spans 341 residues: Ribosomal RNA small subunit methyltransferase H (341 aa).

S-adenosyl-L-methionine-binding positions include G47–Y49, D64, F91, D109, and Q116.

This sequence belongs to the methyltransferase superfamily. RsmH family.

The protein localises to the cytoplasm. It catalyses the reaction cytidine(1402) in 16S rRNA + S-adenosyl-L-methionine = N(4)-methylcytidine(1402) in 16S rRNA + S-adenosyl-L-homocysteine + H(+). Functionally, specifically methylates the N4 position of cytidine in position 1402 (C1402) of 16S rRNA. The protein is Ribosomal RNA small subunit methyltransferase H of Rhizobium leguminosarum bv. trifolii (strain WSM1325).